Consider the following 235-residue polypeptide: MRLAVNIDHVATLRNARGEFHPDPVEAALIAEQAGAAGIVCHLREDRRHIKDDDLRRLRAAVTTKLDLEMAMTEELQAIALATKPELITLVPEKREELTTEGGFDIVRHFDTLKAYLQPFRSAGIEVSLFIEPDKQAIELAAQAGADIVELHTGLYALKAGEAQEEELTRIGNAAAFARNIGLKVVAGHGLNYSNIAPFRNIVEIEEVSIGHAIITRAIFSGLEGAVREMVALIR.

Asn-6 provides a ligand contact to 3-amino-2-oxopropyl phosphate. Position 8 to 9 (8 to 9 (DH)) interacts with 1-deoxy-D-xylulose 5-phosphate. Arg-17 is a 3-amino-2-oxopropyl phosphate binding site. His-42 (proton acceptor) is an active-site residue. Residues Arg-44 and His-49 each coordinate 1-deoxy-D-xylulose 5-phosphate. The active-site Proton acceptor is Glu-69. Thr-99 lines the 1-deoxy-D-xylulose 5-phosphate pocket. Residue His-189 is the Proton donor of the active site. Residues Gly-190 and 211–212 (GH) each bind 3-amino-2-oxopropyl phosphate.

It belongs to the PNP synthase family. As to quaternary structure, homooctamer; tetramer of dimers.

It localises to the cytoplasm. The enzyme catalyses 3-amino-2-oxopropyl phosphate + 1-deoxy-D-xylulose 5-phosphate = pyridoxine 5'-phosphate + phosphate + 2 H2O + H(+). It functions in the pathway cofactor biosynthesis; pyridoxine 5'-phosphate biosynthesis; pyridoxine 5'-phosphate from D-erythrose 4-phosphate: step 5/5. Its function is as follows. Catalyzes the complicated ring closure reaction between the two acyclic compounds 1-deoxy-D-xylulose-5-phosphate (DXP) and 3-amino-2-oxopropyl phosphate (1-amino-acetone-3-phosphate or AAP) to form pyridoxine 5'-phosphate (PNP) and inorganic phosphate. The polypeptide is Pyridoxine 5'-phosphate synthase (Chlorobium chlorochromatii (strain CaD3)).